We begin with the raw amino-acid sequence, 269 residues long: Regulatory protein RecX (269 aa).

The protein belongs to the RecX family.

The protein localises to the cytoplasm. In terms of biological role, modulates RecA activity. This chain is Regulatory protein RecX, found in Lactococcus lactis subsp. cremoris (strain MG1363).